The sequence spans 90 residues: Elongation factor 1-beta (90 aa).

Belongs to the EF-1-beta/EF-1-delta family.

Functionally, promotes the exchange of GDP for GTP in EF-1-alpha/GDP, thus allowing the regeneration of EF-1-alpha/GTP that could then be used to form the ternary complex EF-1-alpha/GTP/AAtRNA. The polypeptide is Elongation factor 1-beta (Desulfurococcus amylolyticus (strain DSM 18924 / JCM 16383 / VKM B-2413 / 1221n) (Desulfurococcus kamchatkensis)).